Consider the following 260-residue polypeptide: Putative sgc region transcriptional regulator (260 aa).

Residues 5 to 61 (RPDRIKQMLHYLWQHRHLSTQQAMELFGYAEATVRRDFQYIVNQYPGMIRGHGCLDF) form the HTH deoR-type domain. The H-T-H motif DNA-binding region spans 22 to 41 (LSTQQAMELFGYAEATVRRD).

Its function is as follows. Putative transcriptional regulator for the sgcREAQCX region. The polypeptide is Putative sgc region transcriptional regulator (sgcR) (Escherichia coli (strain K12)).